A 238-amino-acid chain; its full sequence is tRNA (guanine-N(7)-)-methyltransferase (238 aa).

The S-adenosyl-L-methionine site is built by E68, E93, D121, and D143. D143 is a catalytic residue. Residues K147, D179, and 216 to 219 contribute to the substrate site; that span reads TRYE.

This sequence belongs to the class I-like SAM-binding methyltransferase superfamily. TrmB family.

The enzyme catalyses guanosine(46) in tRNA + S-adenosyl-L-methionine = N(7)-methylguanosine(46) in tRNA + S-adenosyl-L-homocysteine. The protein operates within tRNA modification; N(7)-methylguanine-tRNA biosynthesis. Catalyzes the formation of N(7)-methylguanine at position 46 (m7G46) in tRNA. The chain is tRNA (guanine-N(7)-)-methyltransferase from Paramagnetospirillum magneticum (strain ATCC 700264 / AMB-1) (Magnetospirillum magneticum).